The primary structure comprises 365 residues: Probable 7-methylxanthine methyltransferase PCS2 (365 aa).

Y19 serves as a coordination point for S-adenosyl-L-homocysteine. Position 26 (T26) interacts with theobromine. S-adenosyl-L-homocysteine-binding residues include C62, D99, L100, S134, and F135. Residues Y152, H155, and W156 each contribute to the theobromine site. Mg(2+) is bound at residue N173. R221 contributes to the theobromine binding site. Residues D259, F261, and N262 each coordinate Mg(2+).

The protein belongs to the methyltransferase superfamily. Type-7 methyltransferase family. Mg(2+) is required as a cofactor.

The catalysed reaction is 7-methylxanthine + S-adenosyl-L-methionine = theobromine + S-adenosyl-L-homocysteine + H(+). In terms of biological role, no detectable N-methyltransferase activity. This is Probable 7-methylxanthine methyltransferase PCS2 from Camellia ptilophylla (Cocoa tea).